The chain runs to 140 residues: 6,7-dimethyl-8-ribityllumazine synthase (140 aa).

5-amino-6-(D-ribitylamino)uracil contacts are provided by residues phenylalanine 11, 43-45 (SFD), and 67-69 (CVI). Residue 72 to 73 (DT) participates in (2S)-2-hydroxy-3-oxobutyl phosphate binding. Histidine 75 acts as the Proton donor in catalysis. Leucine 100 is a binding site for 5-amino-6-(D-ribitylamino)uracil. Arginine 115 is a binding site for (2S)-2-hydroxy-3-oxobutyl phosphate.

This sequence belongs to the DMRL synthase family. In terms of assembly, forms an icosahedral capsid composed of 60 subunits, arranged as a dodecamer of pentamers.

It carries out the reaction (2S)-2-hydroxy-3-oxobutyl phosphate + 5-amino-6-(D-ribitylamino)uracil = 6,7-dimethyl-8-(1-D-ribityl)lumazine + phosphate + 2 H2O + H(+). Its pathway is cofactor biosynthesis; riboflavin biosynthesis; riboflavin from 2-hydroxy-3-oxobutyl phosphate and 5-amino-6-(D-ribitylamino)uracil: step 1/2. In terms of biological role, catalyzes the formation of 6,7-dimethyl-8-ribityllumazine by condensation of 5-amino-6-(D-ribitylamino)uracil with 3,4-dihydroxy-2-butanone 4-phosphate. This is the penultimate step in the biosynthesis of riboflavin. This Methanococcus vannielii (strain ATCC 35089 / DSM 1224 / JCM 13029 / OCM 148 / SB) protein is 6,7-dimethyl-8-ribityllumazine synthase.